The sequence spans 800 residues: Cation/H(+) antiporter 19 (800 aa).

Transmembrane regions (helical) follow at residues 30 to 50, 60 to 77, 92 to 112, 127 to 147, 158 to 178, 196 to 216, 224 to 244, 278 to 298, 315 to 335, 343 to 363, 375 to 395, and 408 to 428; these read FALP…RLLA, RVIA…SALG, LTVL…LVGL, LLIA…TSFV, QLPF…PVLA, MSAA…AIAL, LVSV…VVAI, FVTD…GIVA, LVSG…TDVT, WGLL…GTVG, AVTL…VLNI, and AILV…VMLI. The disordered stretch occupies residues 776 to 800; that stretch reads ADTRPLVEEDAEYDQSSRDISDLTA. A compositionally biased stretch (basic and acidic residues) spans 790–800; sequence QSSRDISDLTA.

The protein belongs to the monovalent cation:proton antiporter 2 (CPA2) transporter (TC 2.A.37) family. CHX (TC 2.A.37.4) subfamily. Expressed in the whole plant but preferentially in pollen.

The protein resides in the membrane. Its function is as follows. May operate as a cation/H(+) antiporter. In Arabidopsis thaliana (Mouse-ear cress), this protein is Cation/H(+) antiporter 19 (CHX19).